Here is a 139-residue protein sequence, read N- to C-terminus: Metallothiol transferase FosB (139 aa).

Residues 4 to 119 (GINHITYSVS…DGHKLELHTG (116 aa)) enclose the VOC domain. Residues histidine 7, histidine 66, and glutamate 115 each coordinate Mg(2+). The active-site Proton donor/acceptor is glutamate 115.

This sequence belongs to the fosfomycin resistance protein family. FosB subfamily. As to quaternary structure, homodimer. Mg(2+) serves as cofactor.

Its subcellular location is the cytoplasm. Functionally, metallothiol transferase which confers resistance to fosfomycin by catalyzing the addition of a thiol cofactor to fosfomycin. L-cysteine is probably the physiological thiol donor. This is Metallothiol transferase FosB from Staphylococcus haemolyticus.